A 506-amino-acid chain; its full sequence is EPTC-inducible aldehyde dehydrogenase (506 aa).

An NAD(+)-binding site is contributed by 219-225 (GFGVEAG). Residues glutamate 263 and cysteine 302 contribute to the active site.

It belongs to the aldehyde dehydrogenase family.

It carries out the reaction an aldehyde + NAD(+) + H2O = a carboxylate + NADH + 2 H(+). Degrades all aldehydes potentially generated by N dealkylation of thiocarbamates and may also participate in ethanolamine metabolism and further assimilation of degradation products by thiocarbamate-induced cytochrome P-450. The sequence is that of EPTC-inducible aldehyde dehydrogenase (thcA) from Rhodococcus erythropolis (Arthrobacter picolinophilus).